We begin with the raw amino-acid sequence, 392 residues long: Phosphoglycerate kinase (392 aa).

Substrate is bound by residues 26 to 28, R41, 64 to 67, R118, and R151; these read DLN and HLGR. Residues K202, E319, and 345-348 each bind ATP; that span reads GGDT.

It belongs to the phosphoglycerate kinase family. Monomer.

It is found in the cytoplasm. It carries out the reaction (2R)-3-phosphoglycerate + ATP = (2R)-3-phospho-glyceroyl phosphate + ADP. The protein operates within carbohydrate degradation; glycolysis; pyruvate from D-glyceraldehyde 3-phosphate: step 2/5. The sequence is that of Phosphoglycerate kinase from Photobacterium profundum (strain SS9).